The sequence spans 257 residues: Diacetyl reductase [(S)-acetoin forming] (257 aa).

Position 6–30 (isoleucine 6–valine 30) interacts with NAD(+). Serine 139 is a binding site for substrate. Catalysis depends on tyrosine 152, which acts as the Proton acceptor. Residue lysine 156 is part of the active site.

This sequence belongs to the short-chain dehydrogenases/reductases (SDR) family.

The catalysed reaction is (S)-acetoin + NAD(+) = diacetyl + NADH + H(+). In terms of biological role, catalyzes the irreversible reduction of 2,3-butanediol to (S)-acetoin in the presence of NADH. This is Diacetyl reductase [(S)-acetoin forming] (butA) from Staphylococcus epidermidis (strain ATCC 12228 / FDA PCI 1200).